A 313-amino-acid polypeptide reads, in one-letter code: Probable F-box protein At3g44130 (313 aa).

In terms of domain architecture, F-box spans 1–46 (MASGNLPWELEEEILCRLPLGSLVRLRSVCKHWNDFFNDKWFIKKS).

The chain is Probable F-box protein At3g44130 from Arabidopsis thaliana (Mouse-ear cress).